We begin with the raw amino-acid sequence, 910 residues long: MVSLSIIARKLFGSARESRIKRLRQKALQISALEEHFQKLSDGELCQKTDEFRQRLTDGETIDSLLPEAFATVREAAKRVYNMRPFDVQLIGGMVLHNRGIAEMRTGEGKTLMATLPVYLNALEGKGVHVVTVNDYLANRDAETMGKIYSFLGLTTGVILHDLDTNARRAAYACDITYATNNELGFDYLRDNMTFDRSQMVQRGHHYAIIDEVDSILIDEARTPLIISGPLEDRTDFYNLVNTFIPNLTPEDYEIDEKQKTTTFTEIGTEKIEKMLEQAGHLKNDSLYDIENVAIVHHVNNALKAHKLFVRDKDYIVRNGEIVIIDEFTGRMMPGRRYSEGLHQALEAKEHVAIQPENQTLASITFQNYFRMYEKLSGMTGTATTEAEEFSNIYGLEVVEIPTNLPVQRLDEDDEIYRTTEEKYRAIVRDIRQAHEKGQPILVGTTSIEKSEQLAERLRKEGITDFKVLNARYHEQEAYIVAQAGVPGALTIATNMAGRGTDIQLGGNIEMRIRQELQDIPEGSERTAKIEKIKQDVQKLKEKSLAAGGLYVLATERHESRRIDNQLRGRSGRQGDPGRSKFFLSLQDDLMRIFGSDRMDSILQKLGLKENEAIIHPWINKALEKAQKKVEARNFEIRKNLLKYDDVMNDQRKVIFEQRMEIMNAENLTDMMIEMRNDVIEDLIETHIPSGTYSEKWNAKALQSELSQCFNLELPIEEWVKEDGIAEQQILERILDAVTKFENERTEHYSPEMMVYFHKAILLKTIDMLWREHLINLDHLRSVIGFRGYAQRDPLNEYKTEAFELFQTMLKNLRRDVVSKLMSFEIVQHPLESTMPQEMYAEHSTSRNIDKKDGILWAQMQNNTEVSDPIKRDPGDSSTWEKVGRNELCPCGSSKKYKHCHGSFIPKMDG.

Residues glutamine 89, 107-111, and aspartate 502 each bind ATP; that span reads GEGKT. Cysteine 889, cysteine 891, cysteine 900, and histidine 901 together coordinate Zn(2+).

The protein belongs to the SecA family. Monomer and homodimer. Part of the essential Sec protein translocation apparatus which comprises SecA, SecYEG and auxiliary proteins SecDF-YajC and YidC. Zn(2+) serves as cofactor.

It localises to the cell inner membrane. It is found in the cytoplasm. It carries out the reaction ATP + H2O + cellular proteinSide 1 = ADP + phosphate + cellular proteinSide 2.. Functionally, part of the Sec protein translocase complex. Interacts with the SecYEG preprotein conducting channel. Has a central role in coupling the hydrolysis of ATP to the transfer of proteins into and across the cell membrane, serving both as a receptor for the preprotein-SecB complex and as an ATP-driven molecular motor driving the stepwise translocation of polypeptide chains across the membrane. This chain is Protein translocase subunit SecA, found in Bartonella bacilliformis (strain ATCC 35685 / KC583 / Herrer 020/F12,63).